The following is a 410-amino-acid chain: uncharacterized protein (410 aa).

The first 41 residues, 1-41 (MVKSFRMKALIAGAAVAAAVSAGAVSDVPAAKVLQPTAAYA), serve as a signal peptide directing secretion.

As to quaternary structure, interacts with PcrA, Pdp, YclM, YkvL, YhcQ and YomL. The interaction with PcrA is not essential for cell viability or repair of UV-induced lesions.

The protein localises to the secreted. Its function is as follows. Increases the processivity of the PcrA helicase, but does not bind to DNA. This is an uncharacterized protein from Bacillus subtilis (strain 168).